Reading from the N-terminus, the 368-residue chain is UDP-N-acetylglucosamine--N-acetylmuramyl-(pentapeptide) pyrophosphoryl-undecaprenol N-acetylglucosamine transferase (368 aa).

UDP-N-acetyl-alpha-D-glucosamine contacts are provided by residues 14 to 16 (TGG), Asn125, Arg168, Ser196, and Gln297.

It belongs to the glycosyltransferase 28 family. MurG subfamily.

Its subcellular location is the cell inner membrane. The enzyme catalyses di-trans,octa-cis-undecaprenyl diphospho-N-acetyl-alpha-D-muramoyl-L-alanyl-D-glutamyl-meso-2,6-diaminopimeloyl-D-alanyl-D-alanine + UDP-N-acetyl-alpha-D-glucosamine = di-trans,octa-cis-undecaprenyl diphospho-[N-acetyl-alpha-D-glucosaminyl-(1-&gt;4)]-N-acetyl-alpha-D-muramoyl-L-alanyl-D-glutamyl-meso-2,6-diaminopimeloyl-D-alanyl-D-alanine + UDP + H(+). It functions in the pathway cell wall biogenesis; peptidoglycan biosynthesis. In terms of biological role, cell wall formation. Catalyzes the transfer of a GlcNAc subunit on undecaprenyl-pyrophosphoryl-MurNAc-pentapeptide (lipid intermediate I) to form undecaprenyl-pyrophosphoryl-MurNAc-(pentapeptide)GlcNAc (lipid intermediate II). The sequence is that of UDP-N-acetylglucosamine--N-acetylmuramyl-(pentapeptide) pyrophosphoryl-undecaprenol N-acetylglucosamine transferase from Nitrobacter winogradskyi (strain ATCC 25391 / DSM 10237 / CIP 104748 / NCIMB 11846 / Nb-255).